The primary structure comprises 174 residues: Gamma-crystallin D (174 aa).

Beta/gamma crystallin 'Greek key' domains lie at G2–S40 and G41–P83. The connecting peptide stretch occupies residues Y84–S87. Beta/gamma crystallin 'Greek key' domains lie at H88–D128 and G129–I171.

Belongs to the beta/gamma-crystallin family. In terms of assembly, monomer.

Functionally, crystallins are the dominant structural components of the vertebrate eye lens. The polypeptide is Gamma-crystallin D (CRYGD) (Macropus fuliginosus (Western gray kangaroo)).